We begin with the raw amino-acid sequence, 436 residues long: T-box transcription factor TBX6 (436 aa).

A DNA-binding region (T-box) is located at residues 100-273 (LWKEFSSVGT…ANPFAKGFRE (174 aa)). Residues 274–284 (NGRNCKRERDA) show a composition bias toward basic and acidic residues. Disordered regions lie at residues 274-339 (NGRN…APAP) and 360-379 (PSHLPTRSPSFPEAPDSGRS). A compositionally biased stretch (low complexity) spans 325-339 (EQAPAPGEATAAPAP).

Forms a dimeric complex with DNA (in vitro).

It localises to the nucleus. Its function is as follows. T-box transcription factor that plays an essential role in the determination of the fate of axial stem cells: neural vs mesodermal. Acts in part by down-regulating, a specific enhancer (N1) of SOX2, to inhibit neural development. Seems to play also an essential role in left/right axis determination and acts through effects on Notch signaling around the node as well as through an effect on the morphology and motility of the nodal cilia. The sequence is that of T-box transcription factor TBX6 (TBX6) from Gorilla gorilla gorilla (Western lowland gorilla).